Reading from the N-terminus, the 199-residue chain is Probable chemoreceptor glutamine deamidase CheD (199 aa).

This sequence belongs to the CheD family.

The catalysed reaction is L-glutaminyl-[protein] + H2O = L-glutamyl-[protein] + NH4(+). Probably deamidates glutamine residues to glutamate on methyl-accepting chemotaxis receptors (MCPs), playing an important role in chemotaxis. This Nitratidesulfovibrio vulgaris (strain ATCC 29579 / DSM 644 / CCUG 34227 / NCIMB 8303 / VKM B-1760 / Hildenborough) (Desulfovibrio vulgaris) protein is Probable chemoreceptor glutamine deamidase CheD.